A 307-amino-acid chain; its full sequence is Ribosomal RNA small subunit methyltransferase H (307 aa).

Residues 32–34 (GGH), Asp52, Phe78, Asp99, and Gln106 each bind S-adenosyl-L-methionine.

The protein belongs to the methyltransferase superfamily. RsmH family.

It is found in the cytoplasm. It catalyses the reaction cytidine(1402) in 16S rRNA + S-adenosyl-L-methionine = N(4)-methylcytidine(1402) in 16S rRNA + S-adenosyl-L-homocysteine + H(+). Its function is as follows. Specifically methylates the N4 position of cytidine in position 1402 (C1402) of 16S rRNA. The chain is Ribosomal RNA small subunit methyltransferase H from Acinetobacter baumannii (strain AB307-0294).